Consider the following 529-residue polypeptide: Glutamyl-tRNA reductase (529 aa).

47 to 50 (TCNR) is a substrate binding site. Cys48 (nucleophile) is an active-site residue. The tract at residues 56–80 (SPRQQAPAPPRPGSAPPPSDEELSR) is disordered. The span at 62–73 (PAPPRPGSAPPP) shows a compositional bias: pro residues. Residues Ser125, 130–132 (EPQ), and Gln136 each bind substrate. 205–210 (GAGDMA) lines the NADP(+) pocket. The segment at 454 to 505 (RGAVDGPPTPRSARGAAPPASGARGGGSPRHADPRPQAAEDNGVYARQPGGR) is disordered. Low complexity predominate over residues 464–475 (RSARGAAPPASG).

The protein belongs to the glutamyl-tRNA reductase family. In terms of assembly, homodimer.

It carries out the reaction (S)-4-amino-5-oxopentanoate + tRNA(Glu) + NADP(+) = L-glutamyl-tRNA(Glu) + NADPH + H(+). It functions in the pathway porphyrin-containing compound metabolism; protoporphyrin-IX biosynthesis; 5-aminolevulinate from L-glutamyl-tRNA(Glu): step 1/2. Functionally, catalyzes the NADPH-dependent reduction of glutamyl-tRNA(Glu) to glutamate 1-semialdehyde (GSA). In Sorangium cellulosum (strain So ce56) (Polyangium cellulosum (strain So ce56)), this protein is Glutamyl-tRNA reductase.